A 392-amino-acid chain; its full sequence is PMA1 stabilization in the Golgi protein 1 (392 aa).

The signal sequence occupies residues 1–22 (MRFHDSILIFFSLASLYQHVHG). Residues Thr34 and Thr35 are each glycosylated (O-linked (Man) threonine). A glycan (O-linked (Man) serine) is linked at Ser36. O-linked (Man) threonine glycosylation is present at Thr45. Residue Ser49 is glycosylated (O-linked (Man) serine). Residues Thr55, Thr57, and Thr63 are each glycosylated (O-linked (Man) threonine). Ser65 carries an O-linked (Man) serine glycan. The O-linked (Man) threonine glycan is linked to Thr71. Residue Ser80 is glycosylated (O-linked (Man) serine). Thr89 and Thr99 each carry an O-linked (Man) threonine glycan. An O-linked (Man) serine glycan is attached at Ser107. O-linked (Man) threonine glycans are attached at residues Thr108 and Thr112. O-linked (Man) serine glycosylation is found at Ser114 and Ser115. Thr117 is a glycosylation site (O-linked (Man) threonine). O-linked (Man) serine glycosylation is found at Ser119 and Ser148. Thr156 carries an O-linked (Man) threonine glycan. Ser171 carries an O-linked (Man) serine glycan. Residue Thr176 is glycosylated (O-linked (Man) threonine). O-linked (Man) serine glycosylation is present at Ser181. Thr188, Thr192, Thr195, and Thr199 each carry an O-linked (Man) threonine glycan. O-linked (Man) serine glycans are attached at residues Ser203 and Ser215. Topologically, residues 230–317 (DIPATFFSSE…DAGITNDQWY (88 aa)) are lumenal. A helical membrane pass occupies residues 318-338 (YVALSIPTVVVVFFVFMYFFL). The Cytoplasmic portion of the chain corresponds to 339–392 (YVNGKNRDFTDVTRKALNKKRRVLGKFSEMKKFKNMKNHKYTELPSYKKTSKQN).

In terms of assembly, interacts with EXP1. PSG1-N' interacts with ERAD-related proteins involved in PMA1 quality control including EPS1, CDC48, UBX2 and SSM4. PSG1-C' interacts with the TLG1/2 SNARE complex proteins TLG1, TLG2 and VTI1. The precursor protein is cleaved into two polypeptide chains, PSG1-N' and PSG1-C'. The cleavage is performed in the Golgi apparatus by Ca(+)-dependent serine protease KEX2 between Arg-229 and Asp-230. In terms of processing, PSG1-N' is highly O-mannosylated.

Its subcellular location is the golgi apparatus lumen. It is found in the cytoplasmic vesicle. The protein localises to the COPI-coated vesicle membrane. With EXP1, the specific cargo receptor protein for the plasma membrane ATPase PMA1, is involved in the transport and/or maturation of PMA1. EXP1 and PSG1 probably act sequentially to promote PMA1 sorting between the ER and the Golgi, with EXP1 promoting PMA1 export from the ER to the Golgi while PSG1 has a role in PMA1 maturation or quality control in the Golgi. PSG1 might also couple PMA1 sorting and maturation in the early secretory pathway with the glycosylation machinery. Functionally, PSG1 is cleaved by KEX2 in two stable peptides, PSG1-N' and PSG1-C', the former supporting a role in maturation quality control, the latter having a role in modulating vesicular trafficking. This Saccharomyces cerevisiae (strain ATCC 204508 / S288c) (Baker's yeast) protein is PMA1 stabilization in the Golgi protein 1.